We begin with the raw amino-acid sequence, 142 residues long: 3-hydroxyacyl-[acyl-carrier-protein] dehydratase FabZ (142 aa).

H48 is a catalytic residue.

Belongs to the thioester dehydratase family. FabZ subfamily.

It is found in the cytoplasm. The catalysed reaction is a (3R)-hydroxyacyl-[ACP] = a (2E)-enoyl-[ACP] + H2O. Its function is as follows. Involved in unsaturated fatty acids biosynthesis. Catalyzes the dehydration of short chain beta-hydroxyacyl-ACPs and long chain saturated and unsaturated beta-hydroxyacyl-ACPs. The protein is 3-hydroxyacyl-[acyl-carrier-protein] dehydratase FabZ of Anoxybacillus flavithermus (strain DSM 21510 / WK1).